Consider the following 88-residue polypeptide: Small ribosomal subunit protein uS17 (88 aa).

It belongs to the universal ribosomal protein uS17 family. As to quaternary structure, part of the 30S ribosomal subunit.

One of the primary rRNA binding proteins, it binds specifically to the 5'-end of 16S ribosomal RNA. The polypeptide is Small ribosomal subunit protein uS17 (Prochlorococcus marinus (strain MIT 9301)).